The following is a 147-amino-acid chain: Mitochondrial import receptor subunit TOM20 homolog (147 aa).

The Mitochondrial intermembrane segment spans residues 1 to 3; the sequence is MVA. A helical membrane pass occupies residues 4 to 26; that stretch reads VGKTSAIAAGVCGALLLGYCIYF. The Cytoplasmic portion of the chain corresponds to 27–147; that stretch reads DRKRRSDPNF…AQNLSEDDVE (121 aa).

The protein belongs to the Tom20 family. Forms part of the preprotein translocase complex of the outer mitochondrial membrane (TOM complex). Interacts with tom22.

Its subcellular location is the mitochondrion outer membrane. In terms of biological role, central component of the receptor complex responsible for the recognition and translocation of cytosolically synthesized mitochondrial preproteins. Together with tom22 functions as the transit peptide receptor at the surface of the mitochondrion outer membrane and facilitates the movement of preproteins into the tom40 translocation pore. The chain is Mitochondrial import receptor subunit TOM20 homolog (tomm20) from Xenopus laevis (African clawed frog).